A 195-amino-acid chain; its full sequence is Small ribosomal subunit protein bS16 (195 aa).

A compositionally biased stretch (low complexity) spans 171-181; the sequence is PEAPVAAAEPA. The segment at 171–195 is disordered; that stretch reads PEAPVAAAEPAPEVKAEEKEEGGEA.

Belongs to the bacterial ribosomal protein bS16 family.

This chain is Small ribosomal subunit protein bS16, found in Chlorobium luteolum (strain DSM 273 / BCRC 81028 / 2530) (Pelodictyon luteolum).